Consider the following 267-residue polypeptide: Phosphatidylglycerol--prolipoprotein diacylglyceryl transferase (267 aa).

The next 3 helical transmembrane spans lie at 18-38, 57-77, and 95-115; these read LSVR…MWFA, FLFY…VLFY, and GGMS…IFAW. Arg140 is a binding site for a 1,2-diacyl-sn-glycero-3-phospho-(1'-sn-glycerol). 3 helical membrane-spanning segments follow: residues 173–193, 200–220, and 233–253; these read SQLY…QWFI, GSVA…IEYF, and FISM…GLLI.

This sequence belongs to the Lgt family.

Its subcellular location is the cell inner membrane. The enzyme catalyses L-cysteinyl-[prolipoprotein] + a 1,2-diacyl-sn-glycero-3-phospho-(1'-sn-glycerol) = an S-1,2-diacyl-sn-glyceryl-L-cysteinyl-[prolipoprotein] + sn-glycerol 1-phosphate + H(+). It functions in the pathway protein modification; lipoprotein biosynthesis (diacylglyceryl transfer). Catalyzes the transfer of the diacylglyceryl group from phosphatidylglycerol to the sulfhydryl group of the N-terminal cysteine of a prolipoprotein, the first step in the formation of mature lipoproteins. The protein is Phosphatidylglycerol--prolipoprotein diacylglyceryl transferase of Pseudoalteromonas translucida (strain TAC 125).